The primary structure comprises 419 residues: Double-stranded RNA-binding protein 1 (419 aa).

DRBM domains lie at 15–84 and 101–170; these read VFKS…ELAK and LCKN…AIQS. The short motif at 207-222 is the Bipartite nuclear localization element; that stretch reads KARKAQFKKKAQKGKR. 6 tandem repeats follow at residues 247–274, 275–302, 303–330, 331–358, 359–386, and 387–414. A 6 X 28 AA repeats of E-K-I-E-T-T-P-N-L-E-[PS]-[PS]-S-C-M-[NS]-G-L-K-E-A-A-F-G-S-V-E-T region spans residues 247–414; sequence EKIETTPNLE…KEAAFGSVET (168 aa).

As to quaternary structure, homodimer. Heterodimer with DRB2, DRB4 or DRB5. Interacts with SE and DCL1. Interacts with RCF3, RS40 and RS41. As to expression, expressed in rosette and cauline leaves, stems, roots, flowers and siliques.

It localises to the nucleus. The protein localises to the nucleus speckle. Functionally, double-stranded RNA-binding protein involved in RNA-mediated post-transcriptional gene silencing (PTGS). Functions in the microRNAs (miRNAs) biogenesis by assisting DICER-LIKE 1 (DCL1) in the accurate processing from primary miRNAs (pri-miRNAs) to miRNAs in the nucleus. Forms a complex with SERRATE (SE) and DCL1 to promote accurate processing of pri-miRNAs by DCL1. Binds and assist DCL1 for accurate processing of precursor miRNAs (pre-miRNA). Indirectly involved in the production of trans-acting small interfering RNAs (ta-siRNAs) derived from the TAS1, TAS2 or TAS3 endogenous transcripts by participating in the production of their initiating miRNAs. Involved with argonaute 1 (AGO1) in the guide strand selection from miRNA duplexes, presumably by directional loading of the miRNA duplex (guide stand and passenger strand) onto the RNA-induced silencing complex (RISC) for passenger strand degradation. Does not participate in sense transgene-induced post-transcriptional gene silencing (S-PTGS). Involved in several plant development aspects and response to hormones through its role in miRNAs processing. The chain is Double-stranded RNA-binding protein 1 (DRB1) from Arabidopsis thaliana (Mouse-ear cress).